The primary structure comprises 723 residues: MTDSLEYNDINAEVRGVLCSGRLKMTEQNIIFKNTKTGKVEQISAEDIDLINSQKFVGTWGLRVFTKGGVLHRFTGFRDSEHEKLGKFIKAAYSQEMVEKEMCVKGWNWGTARFMGSVLSFDKESKTIFEVPLSHVSQCVTGKNEVTLEFHQNDDAPVGLLEMRFHIPAVESAEEDPVDKFHQNVMSKASVISASGESIAIFREIQILTPRGRYDIKIFSTFFQLHGKTFDYKIPMDSVLRLFMLPHKDSRQMFFVLSLDPPIKQGQTRYHYLVLLFAPDEETTIELPFSEAELRDKYEGKLEKEISGPVYEVMGKVMKVLIGRKITGPGNFIGHSGTAAVGCSFKAAAGYLYPLERGFIYIHKPPLHIRFEEISSVNFARSGGSTRSFDFEVTLKNGTVHIFSSIEKEEYAKLFDYITQKKLHVSNMGKDKSGYKDVDFGDSDNENEPDAYLARLKAEAREKEEDDDDGDSDEESTDEDFKPNENESDVAEEYDSNVESDSDDDSDASGGGGDSDGAKKKKEKKSEKKEKKEKKHKEKERTKKPSKKKKDSGKPKRATTAFMLWLNDTRESIKRENPGIKVTEIAKKGGEMWKELKDKSKWEDAAAKDKQRYHDEMRNYKPEAGGDSDNEKGGKSSKKRKTEPSPSKKANTSGSGFKSKEYISDDDSTSSDDEKDNEPAKKKSKPPSDGDAKKKKAKSESEPEESEEDSNASDEDEEDEASD.

S443 bears the Phosphoserine mark. 2 disordered regions span residues 459 to 564 (EARE…AFML) and 586 to 723 (AKKG…EASD). 2 stretches are compositionally biased toward acidic residues: residues 464 to 478 (EEDD…ESTD) and 486 to 507 (NESD…DDSD). Residues 531 to 557 (KKEKKHKEKERTKKPSKKKKDSGKPKR) are compositionally biased toward basic residues. The segment at residues 555-621 (PKRATTAFML…RYHDEMRNYK (67 aa)) is a DNA-binding region (HMG box). Basic and acidic residues predominate over residues 586–621 (AKKGGEMWKELKDKSKWEDAAAKDKQRYHDEMRNYK). Residue S628 is modified to Phosphoserine. Positions 644–656 (PSPSKKANTSGSG) are enriched in polar residues. A phosphoserine mark is found at S664 and S668. The span at 664–676 (SDDDSTSSDDEKD) shows a compositional bias: acidic residues. T669 is modified (phosphothreonine). Residues S670 and S671 each carry the phosphoserine modification. The segment covering 677–692 (NEPAKKKSKPPSDGDA) has biased composition (basic and acidic residues). The segment covering 702-723 (EPEESEEDSNASDEDEEDEASD) has biased composition (acidic residues).

Belongs to the SSRP1 family. As to quaternary structure, component of the FACT complex, a stable heterodimer of dre4/spt16 and Ssrp. Interacts with CHD1 and TRL/GAGA. As to expression, expressed at highest levels in nurse cells of the ovary.

It is found in the nucleus. The protein localises to the chromosome. The protein resides in the nucleolus. Component of the FACT complex, a general chromatin factor that acts to reorganize nucleosomes. The FACT complex is involved in multiple processes that require DNA as a template such as mRNA elongation, DNA replication and DNA repair. During transcription elongation the FACT complex acts as a histone chaperone that both destabilizes and restores nucleosomal structure. It facilitates the passage of RNA polymerase II and transcription by promoting the dissociation of one histone H2A-H2B dimer from the nucleosome, then subsequently promotes the reestablishment of the nucleosome following the passage of RNA polymerase II. Binds specifically to single-stranded DNA and RNA with highest affinity for nucleotides G and U. The FACT complex is required for expression of Hox genes. This chain is FACT complex subunit Ssrp1 (Ssrp), found in Drosophila melanogaster (Fruit fly).